Consider the following 530-residue polypeptide: N-acetylmuramoyl-L-alanine amidase (530 aa).

A signal peptide spans 1 to 22 (MKAWGALWIVLGLLLWPEPGAA). Residues asparagine 61, asparagine 80, and asparagine 174 are each glycosylated (N-linked (GlcNAc...) asparagine). Serine 219 carries the phosphoserine modification. Asparagine 335 is a glycosylation site (N-linked (GlcNAc...) asparagine). The 127-residue stretch at 386 to 512 (FLYVHHTYVP…RQLVLTHCPG (127 aa)) folds into the N-acetylmuramoyl-L-alanine amidase domain. Residue histidine 390 participates in Zn(2+) binding. Cysteine 399 and cysteine 405 are joined by a disulfide. N-linked (GlcNAc...) asparagine glycosylation is present at asparagine 465. Zn(2+) is bound by residues histidine 502 and cysteine 510.

This sequence belongs to the N-acetylmuramoyl-L-alanine amidase 2 family. Requires Zn(2+) as cofactor. Strongly expressed in liver and fetal liver.

Its subcellular location is the secreted. It is found in the membrane. It carries out the reaction Hydrolyzes the link between N-acetylmuramoyl residues and L-amino acid residues in certain cell-wall glycopeptides.. Its function is as follows. May play a scavenger role by digesting biologically active peptidoglycan (PGN) into biologically inactive fragments. Has no direct bacteriolytic activity. In Mus musculus (Mouse), this protein is N-acetylmuramoyl-L-alanine amidase (Pglyrp2).